We begin with the raw amino-acid sequence, 496 residues long: Glycerol kinase (496 aa).

Thr-12 provides a ligand contact to ADP. ATP contacts are provided by Thr-12, Thr-13, and Ser-14. Thr-12 serves as a coordination point for sn-glycerol 3-phosphate. Arg-16 provides a ligand contact to ADP. The sn-glycerol 3-phosphate site is built by Arg-82, Glu-83, and Tyr-134. 3 residues coordinate glycerol: Arg-82, Glu-83, and Tyr-134. His-230 carries the phosphohistidine; by HPr modification. Asp-244 contacts sn-glycerol 3-phosphate. Glycerol is bound by residues Asp-244 and Gln-245. ADP is bound by residues Thr-266 and Gly-309. Thr-266, Gly-309, Gln-313, and Gly-410 together coordinate ATP. ADP-binding residues include Gly-410 and Asn-414.

This sequence belongs to the FGGY kinase family. In terms of assembly, homotetramer and homodimer (in equilibrium). Post-translationally, the phosphoenolpyruvate-dependent sugar phosphotransferase system (PTS), including enzyme I, and histidine-containing protein (HPr) are required for the phosphorylation, which leads to the activation of the enzyme.

It catalyses the reaction glycerol + ATP = sn-glycerol 3-phosphate + ADP + H(+). It functions in the pathway polyol metabolism; glycerol degradation via glycerol kinase pathway; sn-glycerol 3-phosphate from glycerol: step 1/1. With respect to regulation, activated by phosphorylation and inhibited by fructose 1,6-bisphosphate (FBP). Key enzyme in the regulation of glycerol uptake and metabolism. Catalyzes the phosphorylation of glycerol to yield sn-glycerol 3-phosphate. This is Glycerol kinase from Bacillus licheniformis (strain ATCC 14580 / DSM 13 / JCM 2505 / CCUG 7422 / NBRC 12200 / NCIMB 9375 / NCTC 10341 / NRRL NRS-1264 / Gibson 46).